The sequence spans 417 residues: UDP-N-acetylglucosamine 1-carboxyvinyltransferase (417 aa).

Lys22–Asn23 lines the phosphoenolpyruvate pocket. UDP-N-acetyl-alpha-D-glucosamine is bound at residue Arg93. Cys117 functions as the Proton donor in the catalytic mechanism. Cys117 is subject to 2-(S-cysteinyl)pyruvic acid O-phosphothioketal. Residues Arg122–Gln126, Asp305, and Ile327 contribute to the UDP-N-acetyl-alpha-D-glucosamine site.

It belongs to the EPSP synthase family. MurA subfamily.

The protein localises to the cytoplasm. The enzyme catalyses phosphoenolpyruvate + UDP-N-acetyl-alpha-D-glucosamine = UDP-N-acetyl-3-O-(1-carboxyvinyl)-alpha-D-glucosamine + phosphate. The protein operates within cell wall biogenesis; peptidoglycan biosynthesis. Functionally, cell wall formation. Adds enolpyruvyl to UDP-N-acetylglucosamine. This Nitrosomonas eutropha (strain DSM 101675 / C91 / Nm57) protein is UDP-N-acetylglucosamine 1-carboxyvinyltransferase.